A 212-amino-acid chain; its full sequence is Ribonuclease HII (212 aa).

The RNase H type-2 domain maps to 22–211 (GLVAGVDEVG…VADRILLQNT (190 aa)). The a divalent metal cation site is built by Asp28, Glu29, and Asp120.

The protein belongs to the RNase HII family. Mn(2+) is required as a cofactor. The cofactor is Mg(2+).

It is found in the cytoplasm. The enzyme catalyses Endonucleolytic cleavage to 5'-phosphomonoester.. Functionally, endonuclease that specifically degrades the RNA of RNA-DNA hybrids. This chain is Ribonuclease HII, found in Shewanella frigidimarina (strain NCIMB 400).